A 251-amino-acid polypeptide reads, in one-letter code: Gamma-glutamyl peptidase 5 (251 aa).

A Glutamine amidotransferase type-1 domain is found at 17 to 214; sequence STFVKKAYGG…IDRVVNLKLM (198 aa). Cysteine 101 (nucleophile) is an active-site residue. Residues histidine 193 and glutamate 195 contribute to the active site.

The protein belongs to the peptidase C26 family.

The protein localises to the cytoplasm. It localises to the cytosol. It functions in the pathway secondary metabolite biosynthesis. Its function is as follows. Involved in glucosinolate biosynthesis. Hydrolyzes the gamma-glutamyl peptide bond of several glutathione (GSH) conjugates to produce Cys-Gly conjugates related to glucosinolates. The gamma-Glu-Cys-Gly-GSH conjugates are the sulfur-donating molecule in glucosinolate biosynthesis. This is Gamma-glutamyl peptidase 5 from Arabidopsis thaliana (Mouse-ear cress).